The following is a 185-amino-acid chain: Auxin-responsive protein IAA34 (185 aa).

An EAR-like (transcriptional repression) motif is present at residues 63-67 (LGLSL). The region spanning 92-180 (WGYVKVTMDG…ERLRITRRND (89 aa)) is the PB1 domain.

Belongs to the Aux/IAA family. In terms of assembly, homodimers and heterodimers.

The protein resides in the nucleus. Aux/IAA proteins are short-lived transcriptional factors that function as repressors of early auxin response genes at low auxin concentrations. Repression is thought to result from the interaction with auxin response factors (ARFs), proteins that bind to the auxin-responsive promoter element (AuxRE). Formation of heterodimers with ARF proteins may alter their ability to modulate early auxin response genes expression. The polypeptide is Auxin-responsive protein IAA34 (IAA34) (Arabidopsis thaliana (Mouse-ear cress)).